Reading from the N-terminus, the 357-residue chain is tRNA-specific 2-thiouridylase MnmA (357 aa).

Residues 11–18 (AMSGGVDS) and Leu-37 contribute to the ATP site. The active-site Nucleophile is the Cys-102. Residues Cys-102 and Cys-197 are joined by a disulfide bond. Gly-126 contributes to the ATP binding site. Residues 148-150 (KDQ) form an interaction with tRNA region. Cys-197 serves as the catalytic Cysteine persulfide intermediate. Residues 301 to 302 (RY) are interaction with tRNA.

It belongs to the MnmA/TRMU family.

The protein resides in the cytoplasm. The enzyme catalyses S-sulfanyl-L-cysteinyl-[protein] + uridine(34) in tRNA + AH2 + ATP = 2-thiouridine(34) in tRNA + L-cysteinyl-[protein] + A + AMP + diphosphate + H(+). Its function is as follows. Catalyzes the 2-thiolation of uridine at the wobble position (U34) of tRNA, leading to the formation of s(2)U34. The sequence is that of tRNA-specific 2-thiouridylase MnmA from Dehalococcoides mccartyi (strain ATCC BAA-2266 / KCTC 15142 / 195) (Dehalococcoides ethenogenes (strain 195)).